Here is a 517-residue protein sequence, read N- to C-terminus: Argininosuccinate lyase, chloroplastic (517 aa).

Residues 1–45 constitute a chloroplast transit peptide; that stretch reads MGAIDLSFSQSLLFSSSRSNLSSSTHRSVSFLPPGSKSRCLPPLR. Positions 79, 166, and 211 each coordinate 2-(N(omega)-L-arginino)succinate. Catalysis depends on His-212, which acts as the Proton acceptor. Ser-333 acts as the Proton donor in catalysis. 4 residues coordinate 2-(N(omega)-L-arginino)succinate: Asn-341, Tyr-373, Gln-378, and Lys-381.

It belongs to the lyase 1 family. Argininosuccinate lyase subfamily.

Its subcellular location is the plastid. The protein localises to the chloroplast. It carries out the reaction 2-(N(omega)-L-arginino)succinate = fumarate + L-arginine. It functions in the pathway amino-acid biosynthesis; L-arginine biosynthesis; L-arginine from L-ornithine and carbamoyl phosphate: step 3/3. This chain is Argininosuccinate lyase, chloroplastic, found in Arabidopsis thaliana (Mouse-ear cress).